Reading from the N-terminus, the 467-residue chain is Thiohydroximate-O-sulfate sulfur/sulfate-lyase (nitrile-forming) NSP3 (467 aa).

The Jacalin-type lectin domain maps to 2–143 (AQKLVAQGGE…LHSLGAYVSL (142 aa)). Kelch repeat units follow at residues 177–225 (KIYS…VRMV), 230–276 (TLYT…SMAA), 280–329 (NVYV…VVQG), 331–375 (VWIV…ASAA), and 379–434 (HIVI…ASTT). Arg-237 (proton donor) is an active-site residue. The a (Z)-N-(sulfonatooxy)alkanimidothioate site is built by Arg-237, Ser-270, Arg-292, Gly-321, and Val-370. The active-site Proton donor is Arg-292. Positions 386, 390, and 394 each coordinate Fe(2+). Position 429 (Trp-429) interacts with a (Z)-N-(sulfonatooxy)alkanimidothioate.

This sequence belongs to the jacalin lectin family. It depends on Fe(2+) as a cofactor. As to expression, mainly expressed in roots, and, at low levels, in seedlings and leaves. Observed in seeds.

The catalysed reaction is a (Z)-N-(sulfonatooxy)alkanimidothioate = a nitrile + sulfur + sulfate. The enzyme catalyses (Z)-phenyl-N-(sulfonatooxy)methanimidothioate = phenylacetonitrile + sulfur + sulfate. It catalyses the reaction (Z)-N-(sulfonatooxy)prop-2-enimidothioate = but-3-enenitrile + sulfur + sulfate. Its function is as follows. Specifier protein responsible for constitutive and herbivore-induced simple nitrile formation, especially in roots. Promotes simple nitriles, but not epithionitrile or thiocyanate formation. Converts allylglucosinolate and benzylglucosinolate (glucotropaeolin) to their corresponding simple nitriles in the presence of myrosinase. The chain is Thiohydroximate-O-sulfate sulfur/sulfate-lyase (nitrile-forming) NSP3 from Arabidopsis thaliana (Mouse-ear cress).